The sequence spans 639 residues: uncharacterized protein (639 aa).

A signal peptide spans 1–16 (MLTLYLFTATCCFVCA). 2 disordered regions span residues 80–128 (RRRA…SDKL) and 432–488 (QTAT…TSRT). Polar residues-rich tracts occupy residues 108–122 (TYAT…TASP) and 432–446 (QTAT…QQQP). A compositionally biased stretch (basic and acidic residues) spans 465 to 480 (HGDEPHSDGELRRESH).

This is an uncharacterized protein from Human cytomegalovirus (strain Merlin) (HHV-5).